Here is a 370-residue protein sequence, read N- to C-terminus: Glutamate 5-kinase (370 aa).

Lys-17 lines the ATP pocket. Residues Ser-57, Asp-144, and Asn-156 each contribute to the substrate site. ATP is bound by residues 176 to 177 (SD) and 220 to 226 (TGGMVSK). Residues 282–360 (SGTLTLDDGA…SDLPAEMRRP (79 aa)) enclose the PUA domain.

The protein belongs to the glutamate 5-kinase family.

It is found in the cytoplasm. It carries out the reaction L-glutamate + ATP = L-glutamyl 5-phosphate + ADP. The protein operates within amino-acid biosynthesis; L-proline biosynthesis; L-glutamate 5-semialdehyde from L-glutamate: step 1/2. Its function is as follows. Catalyzes the transfer of a phosphate group to glutamate to form L-glutamate 5-phosphate. In Mycolicibacterium gilvum (strain PYR-GCK) (Mycobacterium gilvum (strain PYR-GCK)), this protein is Glutamate 5-kinase.